The chain runs to 447 residues: Phosphoglucosamine mutase (447 aa).

Ser-101 (phosphoserine intermediate) is an active-site residue. Ser-101, Asp-242, Asp-244, and Asp-246 together coordinate Mg(2+). Residue Ser-101 is modified to Phosphoserine.

Belongs to the phosphohexose mutase family. It depends on Mg(2+) as a cofactor. Post-translationally, activated by phosphorylation.

The catalysed reaction is alpha-D-glucosamine 1-phosphate = D-glucosamine 6-phosphate. In terms of biological role, catalyzes the conversion of glucosamine-6-phosphate to glucosamine-1-phosphate. The sequence is that of Phosphoglucosamine mutase from Methylobacterium radiotolerans (strain ATCC 27329 / DSM 1819 / JCM 2831 / NBRC 15690 / NCIMB 10815 / 0-1).